The primary structure comprises 1188 residues: Probable RNA helicase armi (1188 aa).

723–730 (GPPGSGKT) serves as a coordination point for ATP. A DEAG box motif is present at residues 862–865 (DEAG).

This sequence belongs to the DNA2/NAM7 helicase family. SDE3 subfamily. Forms a complex with piwi and fs(1)Yb; this interaction is required for proper piRNA loading and nuclear localization of piwi. The interaction of piwi and fs(1)Yb is likely to occur via armi. As to expression, abundant in oocytes and syncytial blastoderm. Expressed at low level throughout development, including somatic tissues. First apparent early in oogenesis, in the cytoplasm of stem cells and mitotically dividing cystoblasts. In regions 2a and 2b of the germarium, it is most concentrated in the center of the germline cysts, where the pro-oocyte is located. In stage 1 and early stage 2 egg chambers, it accumulates at the anterior of the oocyte, near the ring canals. It also extends through the ring canals forming a branched structure that links the early oocyte with adjacent nurse cells. In stage 3 cysts, it accumulates at the posterior cortex and localizes to extensions that pass through the oocyte into the nurse cells. Through stages 4 to 7, it continues to be somewhat enriched at the posterior cortex of the oocyte, but at significantly lower level. In stage 9 to 10 egg chambers, it is found throughout the cytoplasm of the oocyte and nurse cells, with slight enrichment at the oocyte cortex.

It is found in the cytoplasm. It catalyses the reaction ATP + H2O = ADP + phosphate + H(+). Functionally, probable RNA helicase required for axial polarization of the oocyte during early and mid oogenesis. Plays a central role in RNA interference (RNAi) process, a process that mediates mRNA destruction of translational repression. Required for the assembly of the RISC complex, a complex required for target RNA destruction or repression. May be required in the RISC assembly to unwind miRNAs, in the production of single-stranded miRNA from the double-stranded miRNA, a key step in RISC formation. Required both for the translational control of oskar (osk) mRNA and cytoskeletal polarization in the oocyte. Required for somatic primary piRNA biogenesis. Involved in repression of long interspersed nuclear elements (LINEs) including HeT-A, I-element and TART LINEs. The chain is Probable RNA helicase armi from Drosophila melanogaster (Fruit fly).